Reading from the N-terminus, the 480-residue chain is Bifunctional protein GlmU (480 aa).

The pyrophosphorylase stretch occupies residues 1-247 (MATPIDVVIM…AAQVAGVNSP (247 aa)). UDP-N-acetyl-alpha-D-glucosamine contacts are provided by residues lysine 24, glutamine 86, 91–92 (GT), 113–115 (SGD), glycine 150, glutamate 172, and asparagine 245. Aspartate 115 provides a ligand contact to Mg(2+). Residue asparagine 245 coordinates Mg(2+). Positions 248–268 (VQLAELERVYQLRQATALMEQ) are linker. The tract at residues 269–480 (GVRLADPARF…WKRPVKVSKG (212 aa)) is N-acetyltransferase. UDP-N-acetyl-alpha-D-glucosamine is bound by residues arginine 355 and lysine 373. Histidine 385 serves as the catalytic Proton acceptor. Residues tyrosine 388 and asparagine 399 each coordinate UDP-N-acetyl-alpha-D-glucosamine. Residues alanine 402, 408–409 (NY), serine 427, glycine 445, and arginine 462 contribute to the acetyl-CoA site.

In the N-terminal section; belongs to the N-acetylglucosamine-1-phosphate uridyltransferase family. This sequence in the C-terminal section; belongs to the transferase hexapeptide repeat family. In terms of assembly, homotrimer. Requires Mg(2+) as cofactor.

Its subcellular location is the cytoplasm. The catalysed reaction is alpha-D-glucosamine 1-phosphate + acetyl-CoA = N-acetyl-alpha-D-glucosamine 1-phosphate + CoA + H(+). It carries out the reaction N-acetyl-alpha-D-glucosamine 1-phosphate + UTP + H(+) = UDP-N-acetyl-alpha-D-glucosamine + diphosphate. It functions in the pathway nucleotide-sugar biosynthesis; UDP-N-acetyl-alpha-D-glucosamine biosynthesis; N-acetyl-alpha-D-glucosamine 1-phosphate from alpha-D-glucosamine 6-phosphate (route II): step 2/2. It participates in nucleotide-sugar biosynthesis; UDP-N-acetyl-alpha-D-glucosamine biosynthesis; UDP-N-acetyl-alpha-D-glucosamine from N-acetyl-alpha-D-glucosamine 1-phosphate: step 1/1. The protein operates within bacterial outer membrane biogenesis; LPS lipid A biosynthesis. In terms of biological role, catalyzes the last two sequential reactions in the de novo biosynthetic pathway for UDP-N-acetylglucosamine (UDP-GlcNAc). The C-terminal domain catalyzes the transfer of acetyl group from acetyl coenzyme A to glucosamine-1-phosphate (GlcN-1-P) to produce N-acetylglucosamine-1-phosphate (GlcNAc-1-P), which is converted into UDP-GlcNAc by the transfer of uridine 5-monophosphate (from uridine 5-triphosphate), a reaction catalyzed by the N-terminal domain. This Polaromonas sp. (strain JS666 / ATCC BAA-500) protein is Bifunctional protein GlmU.